Consider the following 426-residue polypeptide: Serine--tRNA ligase (426 aa).

233 to 235 is a binding site for L-serine; that stretch reads TAE. 264 to 266 provides a ligand contact to ATP; the sequence is RSE. L-serine is bound at residue Glu287. 351 to 354 contributes to the ATP binding site; that stretch reads EISS. Residue Ser387 participates in L-serine binding.

Belongs to the class-II aminoacyl-tRNA synthetase family. Type-1 seryl-tRNA synthetase subfamily. In terms of assembly, homodimer. The tRNA molecule binds across the dimer.

It is found in the cytoplasm. The catalysed reaction is tRNA(Ser) + L-serine + ATP = L-seryl-tRNA(Ser) + AMP + diphosphate + H(+). It carries out the reaction tRNA(Sec) + L-serine + ATP = L-seryl-tRNA(Sec) + AMP + diphosphate + H(+). Its pathway is aminoacyl-tRNA biosynthesis; selenocysteinyl-tRNA(Sec) biosynthesis; L-seryl-tRNA(Sec) from L-serine and tRNA(Sec): step 1/1. Its function is as follows. Catalyzes the attachment of serine to tRNA(Ser). Is also able to aminoacylate tRNA(Sec) with serine, to form the misacylated tRNA L-seryl-tRNA(Sec), which will be further converted into selenocysteinyl-tRNA(Sec). This Pseudomonas putida (strain ATCC 700007 / DSM 6899 / JCM 31910 / BCRC 17059 / LMG 24140 / F1) protein is Serine--tRNA ligase.